We begin with the raw amino-acid sequence, 552 residues long: Cytochrome P450 97B1, chloroplastic (552 aa).

The N-terminal 52 residues, 1–52, are a transit peptide targeting the chloroplast; the sequence is MVAAPISTVKLTDANLHTRFHSSSSSTPSTLSLPLSLHFHFSSHSKRFSSIR. Cys-528 is a binding site for heme.

The protein belongs to the cytochrome P450 family. Requires heme as cofactor.

It is found in the plastid. The protein resides in the chloroplast membrane. The sequence is that of Cytochrome P450 97B1, chloroplastic (CYP97B1) from Pisum sativum (Garden pea).